Reading from the N-terminus, the 328-residue chain is GMP reductase (328 aa).

Catalysis depends on cysteine 176, which acts as the Thioimidate intermediate. Isoleucine 205 to valine 228 serves as a coordination point for NADP(+).

It belongs to the IMPDH/GMPR family. GuaC type 2 subfamily.

It carries out the reaction IMP + NH4(+) + NADP(+) = GMP + NADPH + 2 H(+). In terms of biological role, catalyzes the irreversible NADPH-dependent deamination of GMP to IMP. It functions in the conversion of nucleobase, nucleoside and nucleotide derivatives of G to A nucleotides, and in maintaining the intracellular balance of A and G nucleotides. The sequence is that of GMP reductase from Bacillus thuringiensis (strain Al Hakam).